Consider the following 1018-residue polypeptide: Importin-9 (1018 aa).

One can recognise an Importin N-terminal domain in the interval 35–114 (TEKRIKQLEY…RNILPNGLYD (80 aa)). Positions 921 to 950 (GKSDEPLTDSEEDGDDEDAPGNPDKPRYIS) are disordered. Residues 926–939 (PLTDSEEDGDDEDA) are compositionally biased toward acidic residues.

It belongs to the importin beta family.

It localises to the cytoplasm. The protein localises to the nucleus. In terms of biological role, nuclear transport receptor that mediates nuclear import of proteins. Serves as receptor for nuclear localization signals (NLS) in cargo substrates. Is thought to mediate docking of the importin/substrate complex to the nuclear pore complex (NPC) through binding to nucleoporin and the complex is subsequently translocated through the pore by an energy requiring, Ran-dependent mechanism. Mediates the import of pre-assembled proteasomes into the nucleus during the late stages of sperm development. This chain is Importin-9, found in Drosophila melanogaster (Fruit fly).